The sequence spans 607 residues: Probable Ufm1-specific protease 2 (607 aa).

Catalysis depends on residues Cys-440, Asp-564, and His-566.

Belongs to the peptidase C78 family.

Thiol protease which recognizes and hydrolyzes the peptide bond at the C-terminal Gly of UFM1, a ubiquitin-like modifier protein bound to a number of target proteins. Does not hydrolyze SUMO1 or ISG15 ubiquitin-like proteins. This is Probable Ufm1-specific protease 2 from Drosophila melanogaster (Fruit fly).